Here is a 290-residue protein sequence, read N- to C-terminus: 33 kDa chaperonin (290 aa).

Cystine bridges form between Cys235/Cys237 and Cys268/Cys271.

Belongs to the HSP33 family. In terms of processing, under oxidizing conditions two disulfide bonds are formed involving the reactive cysteines. Under reducing conditions zinc is bound to the reactive cysteines and the protein is inactive.

It is found in the cytoplasm. In terms of biological role, redox regulated molecular chaperone. Protects both thermally unfolding and oxidatively damaged proteins from irreversible aggregation. Plays an important role in the bacterial defense system toward oxidative stress. The protein is 33 kDa chaperonin of Streptococcus equi subsp. zooepidemicus (strain H70).